A 330-amino-acid polypeptide reads, in one-letter code: tRNA-modifying protein YgfZ (330 aa).

Folate is bound by residues W28 and W190.

This sequence belongs to the tRNA-modifying YgfZ family.

It is found in the cytoplasm. In terms of biological role, folate-binding protein involved in regulating the level of ATP-DnaA and in the modification of some tRNAs. It is probably a key factor in regulatory networks that act via tRNA modification, such as initiation of chromosomal replication. This chain is tRNA-modifying protein YgfZ, found in Yersinia enterocolitica serotype O:8 / biotype 1B (strain NCTC 13174 / 8081).